A 382-amino-acid polypeptide reads, in one-letter code: FK506-binding protein 4 (382 aa).

A disordered region spans residues 139 to 274; that stretch reads GLEVDEEIES…KEEPKKKITK (136 aa). A compositionally biased stretch (acidic residues) spans 141–173; the sequence is EVDEEIESDEEVESDEEIESDEEIESEEEEEEP. Basic and acidic residues-rich tracts occupy residues 180–190 and 196–270; these read RPAEEVKEIAS and EKKE…EPKK. The region spanning 295–382 is the PPIase FKBP-type domain; the sequence is GQRVGMRYIG…VFDVKLLSMK (88 aa).

The protein belongs to the FKBP-type PPIase family. FKBP3/4 subfamily. As to quaternary structure, binds to histones H3 and H4.

It is found in the nucleus. The catalysed reaction is [protein]-peptidylproline (omega=180) = [protein]-peptidylproline (omega=0). With respect to regulation, inhibited by both FK506 and rapamycin. Functionally, PPIase that acts as a histone chaperone. Histone proline isomerase that increases the rate of cis-trans isomerization at prolines on the histone H3 N-terminal tail. Proline isomerization influences H3 methylation thereby regulating gene expression. The chain is FK506-binding protein 4 (FKBP4) from Rhizopus delemar (strain RA 99-880 / ATCC MYA-4621 / FGSC 9543 / NRRL 43880) (Mucormycosis agent).